The primary structure comprises 369 residues: Coiled-coil domain-containing protein 149 (369 aa).

Residues 1-249 (MKENNNAEIL…AKYKQMAEAV (249 aa)) adopt a coiled-coil conformation.

It belongs to the CCDC149 family. Expressed in amphid and phasmid ciliated neurons, and also pharyngeal, touch receptor and motor neurons.

The protein resides in the cell projection. It localises to the cilium. The sequence is that of Coiled-coil domain-containing protein 149 from Caenorhabditis elegans.